The chain runs to 123 residues: Ribosome-binding factor A (123 aa).

The protein belongs to the RbfA family. As to quaternary structure, monomer. Binds 30S ribosomal subunits, but not 50S ribosomal subunits or 70S ribosomes.

The protein localises to the cytoplasm. In terms of biological role, one of several proteins that assist in the late maturation steps of the functional core of the 30S ribosomal subunit. Associates with free 30S ribosomal subunits (but not with 30S subunits that are part of 70S ribosomes or polysomes). Required for efficient processing of 16S rRNA. May interact with the 5'-terminal helix region of 16S rRNA. This is Ribosome-binding factor A from Cupriavidus metallidurans (strain ATCC 43123 / DSM 2839 / NBRC 102507 / CH34) (Ralstonia metallidurans).